Reading from the N-terminus, the 501-residue chain is Membrane-bound lytic murein transglycosylase F (501 aa).

The first 29 residues, 1–29 (MTKILLNTASTVLTRLWKLSLLGLVFAVA), serve as a signal peptide directing secretion. Residues 30–274 (AATLVSSRIP…DAMETFYGHL (245 aa)) form a non-LT domain region. An LT domain region spans residues 275–501 (GEIDYSGAIL…VKSISGTSSL (227 aa)). Residue Glu-321 is part of the active site.

The protein in the N-terminal section; belongs to the bacterial solute-binding protein 3 family. In the C-terminal section; belongs to the transglycosylase Slt family.

The protein localises to the cell outer membrane. The enzyme catalyses Exolytic cleavage of the (1-&gt;4)-beta-glycosidic linkage between N-acetylmuramic acid (MurNAc) and N-acetylglucosamine (GlcNAc) residues in peptidoglycan, from either the reducing or the non-reducing ends of the peptidoglycan chains, with concomitant formation of a 1,6-anhydrobond in the MurNAc residue.. Murein-degrading enzyme that degrades murein glycan strands and insoluble, high-molecular weight murein sacculi, with the concomitant formation of a 1,6-anhydromuramoyl product. Lytic transglycosylases (LTs) play an integral role in the metabolism of the peptidoglycan (PG) sacculus. Their lytic action creates space within the PG sacculus to allow for its expansion as well as for the insertion of various structures such as secretion systems and flagella. This is Membrane-bound lytic murein transglycosylase F from Saccharophagus degradans (strain 2-40 / ATCC 43961 / DSM 17024).